Consider the following 855-residue polypeptide: DNA mismatch repair protein MutS (855 aa).

613-620 contributes to the ATP binding site; the sequence is GPNMGGKS. The tract at residues 796-816 is disordered; the sequence is TTSLPHEMPSQQSGKPASPMQ.

The protein belongs to the DNA mismatch repair MutS family.

Its function is as follows. This protein is involved in the repair of mismatches in DNA. It is possible that it carries out the mismatch recognition step. This protein has a weak ATPase activity. This Pseudomonas aeruginosa (strain ATCC 15692 / DSM 22644 / CIP 104116 / JCM 14847 / LMG 12228 / 1C / PRS 101 / PAO1) protein is DNA mismatch repair protein MutS.